Reading from the N-terminus, the 292-residue chain is Ribosomal protein L11 methyltransferase (292 aa).

S-adenosyl-L-methionine-binding residues include Thr-144, Gly-165, Asp-187, and Asn-229.

The protein belongs to the methyltransferase superfamily. PrmA family.

Its subcellular location is the cytoplasm. The catalysed reaction is L-lysyl-[protein] + 3 S-adenosyl-L-methionine = N(6),N(6),N(6)-trimethyl-L-lysyl-[protein] + 3 S-adenosyl-L-homocysteine + 3 H(+). In terms of biological role, methylates ribosomal protein L11. The protein is Ribosomal protein L11 methyltransferase of Pseudomonas savastanoi pv. phaseolicola (strain 1448A / Race 6) (Pseudomonas syringae pv. phaseolicola (strain 1448A / Race 6)).